The chain runs to 83 residues: Mu-theraphotoxin-Hhn2m (83 aa).

An N-terminal signal peptide occupies residues 1–21 (MKASMFLALAGLVLLFVVGYA). Positions 22–48 (SESEEKEFPIELLSKIFAVDVFKGEER) are excised as a propeptide. 3 cysteine pairs are disulfide-bonded: Cys-50/Cys-65, Cys-57/Cys-70, and Cys-64/Cys-77. A Leucine amide modification is found at Leu-81.

Belongs to the neurotoxin 10 (Hwtx-1) family. 15 (Hntx-3) subfamily. In terms of assembly, monomer. In terms of tissue distribution, expressed by the venom gland.

The protein localises to the secreted. Functionally, lethal neurotoxin. Selectively blocks tetrodotoxin-sensitive voltage-gated sodium channels (Nav). Does not affect tetrodotoxin-resistant voltage-gated sodium channels or calcium channels. The polypeptide is Mu-theraphotoxin-Hhn2m (Cyriopagopus hainanus (Chinese bird spider)).